An 85-amino-acid chain; its full sequence is Small ribosomal subunit protein uS12m (85 aa).

This sequence belongs to the universal ribosomal protein uS12 family.

It localises to the mitochondrion matrix. It is found in the kinetoplast. Functionally, protein S12 is involved in the translation initiation step. The polypeptide is Small ribosomal subunit protein uS12m (RPS12) (Leishmania tarentolae (Sauroleishmania tarentolae)).